Consider the following 535-residue polypeptide: Flavin-containing monooxygenase 2 (535 aa).

Position 2 is an N-acetylalanine (A2). Residues 9 to 13 (GAGVS), E32, 40 to 41 (VW), and 61 to 62 (NT) each bind FAD. NADP(+) contacts are provided by residues 60-61 (TN) and 195-198 (SGSD). K492 participates in a covalent cross-link: Glycyl lysine isopeptide (Lys-Gly) (interchain with G-Cter in SUMO). The chain crosses the membrane as a helical span at residues 510–530 (FSVSFLLKILGLLAVVVAFFC).

Belongs to the FMO family. The cofactor is FAD. Mg(2+) is required as a cofactor. In terms of tissue distribution, expressed in lung (at protein level). Expressed predominantly in lung, and at a much lesser extent in kidney. Also expressed in fetal lung, but not in liver, kidney and brain.

The protein resides in the microsome membrane. It localises to the endoplasmic reticulum membrane. Its function is as follows. Catalyzes the oxidative metabolism of numerous xenobiotics, including mainly therapeutic drugs and insecticides that contain a soft nucleophile, most commonly nitrogen and sulfur and participates to their bioactivation. Specifically catalyzes S-oxygenation of sulfur derived compounds such as thioureas-derived compounds, thioetherorganophosphates to their sulfenic acid. In vitro, catalyzes S-oxygenation of the second-line antitubercular drugs thiacetazone (TAZ) and ethionamide (ETA), forming a sulfinic acid and a carbodiimide via a postulated sulfenic acid intermediate. Also catalyzes S-oxygenation of the thioether-containing organophosphate insecticides, phorate and disulfoton. The sequence is that of Flavin-containing monooxygenase 2 from Homo sapiens (Human).